The sequence spans 69 residues: Putative membrane protein insertion efficiency factor (69 aa).

It belongs to the UPF0161 family.

The protein resides in the cell membrane. Functionally, could be involved in insertion of integral membrane proteins into the membrane. The polypeptide is Putative membrane protein insertion efficiency factor (Thermoanaerobacter pseudethanolicus (strain ATCC 33223 / 39E) (Clostridium thermohydrosulfuricum)).